A 362-amino-acid chain; its full sequence is RING finger protein 32 (362 aa).

Residues 127-169 (CPICKEEFELRPQVLLSCSHVFHRACLQAFEKFTNKKTCPLCR) form an RING-type 1; atypical zinc finger. Positions 186–215 (RIKCVTRIQAYWRGYVVRKWYRNLRETVPP) constitute an IQ domain. The segment at 293–352 (CSICLAPLSPAGGQRVGAGQRSRETALLSCSHVFHHACLLALEEFSVGDRPPFHACPLCR) adopts an RING-type 2; atypical zinc-finger fold.

Its subcellular location is the cytoplasm. Functionally, may play a role in sperm formation. This is RING finger protein 32 (RNF32) from Macaca fascicularis (Crab-eating macaque).